The chain runs to 142 residues: Transcriptional regulator MraZ (142 aa).

SpoVT-AbrB domains are found at residues alanine 5–glutamate 51 and alanine 77–threonine 120.

This sequence belongs to the MraZ family. Forms oligomers.

Its subcellular location is the cytoplasm. The protein resides in the nucleoid. The chain is Transcriptional regulator MraZ from Paraburkholderia phytofirmans (strain DSM 17436 / LMG 22146 / PsJN) (Burkholderia phytofirmans).